The primary structure comprises 215 residues: Probable transaldolase (215 aa).

The active-site Schiff-base intermediate with substrate is lysine 83.

This sequence belongs to the transaldolase family. Type 3B subfamily.

The protein localises to the cytoplasm. It carries out the reaction D-sedoheptulose 7-phosphate + D-glyceraldehyde 3-phosphate = D-erythrose 4-phosphate + beta-D-fructose 6-phosphate. The protein operates within carbohydrate degradation; pentose phosphate pathway; D-glyceraldehyde 3-phosphate and beta-D-fructose 6-phosphate from D-ribose 5-phosphate and D-xylulose 5-phosphate (non-oxidative stage): step 2/3. Functionally, transaldolase is important for the balance of metabolites in the pentose-phosphate pathway. This Methanococcus vannielii (strain ATCC 35089 / DSM 1224 / JCM 13029 / OCM 148 / SB) protein is Probable transaldolase.